The primary structure comprises 518 residues: Retinal dehydrogenase 2 (518 aa).

At Y168 the chain carries Phosphotyrosine. NAD(+) is bound by residues 184–186, 210–213, and 264–266; these read IPW, KPAE, and STE. E286 serves as the catalytic Proton acceptor. C320 functions as the Nucleophile in the catalytic mechanism. The residue at position 351 (S351) is a Phosphoserine. Residues 366–370 and E417 contribute to the NAD(+) site; that span reads KQYNK.

Belongs to the aldehyde dehydrogenase family. Homotetramer.

It is found in the cytoplasm. It catalyses the reaction retinal + NAD(+) + H2O = retinoate + NADH + 2 H(+). The catalysed reaction is all-trans-retinal + NAD(+) + H2O = all-trans-retinoate + NADH + 2 H(+). The enzyme catalyses all-trans-13,14-dihydroretinal + NAD(+) + H2O = all-trans-13,14-dihydroretinoate + NADH + 2 H(+). It functions in the pathway cofactor metabolism; retinol metabolism. Its function is as follows. Catalyzes the NAD-dependent oxidation of aldehyde substrates, such as all-trans-retinal and all-trans-13,14-dihydroretinal, to their corresponding carboxylic acids, all-trans-retinoate and all-trans-13,14-dihydroretinoate, respectively. Retinoate signaling is critical for the transcriptional control of many genes, for instance it is crucial for initiation of meiosis in both male and female. Recognizes retinal as substrate, both in its free form and when bound to cellular retinol-binding protein. Can metabolize octanal and decanal, but has only very low activity with benzaldehyde, acetaldehyde and propanal. Displays complete lack of activity with citral. The protein is Retinal dehydrogenase 2 (ALDH1A2) of Homo sapiens (Human).